The primary structure comprises 362 residues: Oxygen-dependent coproporphyrinogen-III oxidase (362 aa).

The tract at residues 12–31 (RQENDQSTPQLELPPTDSRD) is disordered. S118 lines the substrate pocket. Residues H122 and H132 each coordinate a divalent metal cation. H132 (proton donor) is an active-site residue. 134 to 136 (NYR) serves as a coordination point for substrate. 2 residues coordinate a divalent metal cation: H166 and H196. An important for dimerization region spans residues 286 to 321 (YVEFNLVWDRGTIFGLQTNGRTESILMSLPPLVRWE).

It belongs to the aerobic coproporphyrinogen-III oxidase family. Homodimer. It depends on a divalent metal cation as a cofactor.

The protein localises to the cytoplasm. It catalyses the reaction coproporphyrinogen III + O2 + 2 H(+) = protoporphyrinogen IX + 2 CO2 + 2 H2O. Its pathway is porphyrin-containing compound metabolism; protoporphyrin-IX biosynthesis; protoporphyrinogen-IX from coproporphyrinogen-III (O2 route): step 1/1. Functionally, involved in the heme and chlorophyll biosynthesis. Catalyzes the aerobic oxidative decarboxylation of propionate groups of rings A and B of coproporphyrinogen-III to yield the vinyl groups in protoporphyrinogen-IX. The chain is Oxygen-dependent coproporphyrinogen-III oxidase from Synechococcus sp. (strain CC9902).